The primary structure comprises 575 residues: MRLLSLLFLLGLATLSFAVRSQWAQQGRATHEALITIRFALTQQNLDVLERTLLDISDTTSKNYGKWKTAEEVTELVAPAREISERVASFLERQGATKVENFRDMVKVTAPVSWIEETLHTNLFFFQHKTRTSKVIIRADGGYKIPAEIAEHVDFVAGLFEFPSIKNARTQVGAGVDGYIVPYVIFDLYGIPTTFPVHPNSSICLVEFQDDQSYNKDDLKKFAKENEITETVVSHTVGPYSGSSADTESTLDVQYGGAIALNTTVWFWTVEDWMYDFATDFLNTKNPPLVVSMSWGWPEPEQCQVGNCTGDETSLEYVVRTNVEFQKIGAIGTTLLAASGDQGAPGDSDPECNSKKKPLSSIFPGASPWVLSVGATMLSNMTTEDADPSAEPPICKSWTCSTSTTELVCTIPQALITTGGGFSDYSLQPSYQNAAVAAYFKSGVPLPPQTDFNASNRGFPDVSALGHNYLIALSGDFEQVDGTSASTPVFAAIIAHLNSYRLNNGKPPLAFAVPLIYQAFASDPTIFNDITTGDNKCTEDCCSKFGYEATKGWDPVTGVGTPVFSKLLAFVQTLP.

A signal peptide spans 1–18; it reads MRLLSLLFLLGLATLSFA. Positions 19 to 173 are cleaved as a propeptide — removed in mature form; sequence VRSQWAQQGR…SIKNARTQVG (155 aa). In terms of domain architecture, Peptidase S53 spans 179–574; the sequence is YIVPYVIFDL…SKLLAFVQTL (396 aa). N200 is a glycosylation site (N-linked (GlcNAc...) asparagine). Catalysis depends on charge relay system residues E248 and D252. N-linked (GlcNAc...) asparagine glycans are attached at residues N262, N307, N380, and N453. S484 (charge relay system) is an active-site residue. D529, I530, G552, and D554 together coordinate Ca(2+).

Ca(2+) is required as a cofactor. Post-translationally, autocatalytically processed. In terms of processing, N-glycosylated.

The catalysed reaction is Milk clotting activity. Preferential cleavage of 8-Gly-|-Ser-9 in B chain of insulin most rapidly, followed by 11-Leu-|-Val-12, 19-Cys(SO(3)H)-|-Gly and 24-Phe-|-Phe-25. No action on Ac-Phe-Tyr(I)2.. Its activity is regulated as follows. Inhibited by diisopropylfluorophosphate (DFP) and diazoacetyl-D,L-norleucine methyl ester (DAN). The protein is Physarolisin of Physarum polycephalum (Slime mold).